The primary structure comprises 77 residues: Rhodotorucin-A peptides type 2 (77 aa).

Positions 1 to 3 (MVA) are excised as a propeptide. A lipid anchor (S-farnesyl cysteine) is attached at C14. The propeptide occupies 15–18 (TVAK). C29 carries the S-farnesyl cysteine lipid modification. The propeptide occupies 30–33 (TVSK). C44 is lipidated: S-farnesyl cysteine. Positions 45–48 (TVSK) are excised as a propeptide. A lipid anchor (S-farnesyl cysteine) is attached at C59. The propeptide occupies 60–63 (TVSK). The S-farnesyl cysteine moiety is linked to residue C74. Residues 75–77 (TVA) constitute a propeptide that is removed on maturation.

It is found in the cell membrane. Rhodotorucin-A is a mating pheromone in cells of mating type A of Rhodosporidium toruloides. The chain is Rhodotorucin-A peptides type 2 (RHA2) from Rhodotorula toruloides (Yeast).